The following is an 856-amino-acid chain: Putative zinc protease C28F5.4 (856 aa).

H71 is a Zn(2+) binding site. The active-site Proton acceptor is the E74. Zn(2+) is bound by residues H75 and E152.

The protein belongs to the peptidase M16 family.

In Caenorhabditis elegans, this protein is Putative zinc protease C28F5.4.